The following is an 841-amino-acid chain: Probable alpha-glucuronidase A (841 aa).

The signal sequence occupies residues 1-20; it reads MRGLNLFQLILALLLSMVAA. Residues asparagine 51, asparagine 76, asparagine 85, asparagine 149, asparagine 222, asparagine 279, asparagine 310, asparagine 343, asparagine 450, asparagine 465, asparagine 527, asparagine 576, asparagine 682, asparagine 723, and asparagine 732 are each glycosylated (N-linked (GlcNAc...) asparagine).

Belongs to the glycosyl hydrolase 67 family.

It localises to the secreted. It carries out the reaction an alpha-D-glucuronoside + H2O = D-glucuronate + an alcohol. In terms of biological role, alpha-glucuronidase involved in the hydrolysis of xylan, a major structural heterogeneous polysaccharide found in plant biomass representing the second most abundant polysaccharide in the biosphere, after cellulose. Releases 4-O-methylglucuronic acid from xylan. This is Probable alpha-glucuronidase A (aguA) from Aspergillus niger.